A 222-amino-acid chain; its full sequence is Pectate lyase A (222 aa).

Residues 1-25 (MKKMLTLLLSAGLVASIFGVMPAAA) form the signal peptide.

This sequence belongs to the polysaccharide lyase 3 family. Ca(2+) serves as cofactor.

The protein localises to the secreted. The catalysed reaction is Eliminative cleavage of (1-&gt;4)-alpha-D-galacturonan to give oligosaccharides with 4-deoxy-alpha-D-galact-4-enuronosyl groups at their non-reducing ends.. The enzyme catalyses Eliminative cleavage of (1-&gt;4)-alpha-D-galacturonan methyl ester to give oligosaccharides with 4-deoxy-6-O-methyl-alpha-D-galact-4-enuronosyl groups at their non-reducing ends.. It participates in glycan metabolism; pectin degradation; 2-dehydro-3-deoxy-D-gluconate from pectin: step 2/5. Strongly inhibited by Ba(2+). To a lesser extent, is also inhibited by Sn(2+), Mg(2+) and Ag(+). Inhibited by EDTA in vitro. Catalyzes the depolymerization of both polygalacturonate and pectins of methyl esterification degree from 22 to 89%, with an endo mode of action. In contrast to the majority of pectate lyases, displays high activity on highly methylated pectins. Is not able to cleave trigalacturonate. Does not degrade xylans and carboxymethylcellulose (CMC). This Paenibacillus barcinonensis protein is Pectate lyase A (pelA).